The primary structure comprises 196 residues: Regulator of G-protein signaling 1 (196 aa).

Residues 1–27 (MPGMFFSANPKDLKGTDQSLLDDKTQK) are disordered. Residues 11 to 25 (KDLKGTDQSLLDDKT) are compositionally biased toward basic and acidic residues. The 116-residue stretch at 72–187 (SLEKLLANQT…LKSNIYLNLL (116 aa)) folds into the RGS domain.

As to quaternary structure, interacts with GNAI1 and GNAQ.

Its subcellular location is the cell membrane. It localises to the cytoplasm. The protein localises to the cytosol. Its function is as follows. Regulates G protein-coupled receptor signaling cascades, including signaling downstream of the N-formylpeptide chemoattractant receptors and leukotriene receptors. Inhibits B cell chemotaxis toward CXCL12. Inhibits signal transduction by increasing the GTPase activity of G protein alpha subunits, thereby driving them into their inactive GDP-bound form. The protein is Regulator of G-protein signaling 1 (RGS1) of Equus caballus (Horse).